A 164-amino-acid chain; its full sequence is Transcriptional repressor NrdR (164 aa).

Residues 3–34 (CPFCRHEDSRVVDSRSLDDGSAIRRRRQCQAC) fold into a zinc finger. The ATP-cone domain occupies 46–136 (LTVVKRSGVA…VYRDFESLDD (91 aa)).

Belongs to the NrdR family. It depends on Zn(2+) as a cofactor.

Functionally, negatively regulates transcription of bacterial ribonucleotide reductase nrd genes and operons by binding to NrdR-boxes. The polypeptide is Transcriptional repressor NrdR (Micrococcus luteus (strain ATCC 4698 / DSM 20030 / JCM 1464 / CCM 169 / CCUG 5858 / IAM 1056 / NBRC 3333 / NCIMB 9278 / NCTC 2665 / VKM Ac-2230) (Micrococcus lysodeikticus)).